Reading from the N-terminus, the 359-residue chain is tRNA N6-adenosine threonylcarbamoyltransferase (359 aa).

His115 and His119 together coordinate Fe cation. Substrate contacts are provided by residues 137–141 (LVSGG), Asp170, Gly183, and Asn283. Asp311 serves as a coordination point for Fe cation. Residues 328–359 (APDSLDIAPRSRWPLDEKSAPVFGTGRRGAKA) form a disordered region.

Belongs to the KAE1 / TsaD family. Fe(2+) is required as a cofactor.

It localises to the cytoplasm. The enzyme catalyses L-threonylcarbamoyladenylate + adenosine(37) in tRNA = N(6)-L-threonylcarbamoyladenosine(37) in tRNA + AMP + H(+). Required for the formation of a threonylcarbamoyl group on adenosine at position 37 (t(6)A37) in tRNAs that read codons beginning with adenine. Is involved in the transfer of the threonylcarbamoyl moiety of threonylcarbamoyl-AMP (TC-AMP) to the N6 group of A37, together with TsaE and TsaB. TsaD likely plays a direct catalytic role in this reaction. This is tRNA N6-adenosine threonylcarbamoyltransferase from Brucella abortus (strain S19).